Reading from the N-terminus, the 65-residue chain is Small ribosomal subunit protein eS17 (65 aa).

The protein belongs to the eukaryotic ribosomal protein eS17 family.

The protein is Small ribosomal subunit protein eS17 of Methanobrevibacter smithii (strain ATCC 35061 / DSM 861 / OCM 144 / PS).